The chain runs to 148 residues: Glutamyl-tRNA(Gln) amidotransferase subunit C, mitochondrial (148 aa).

This sequence belongs to the GatC family. Subunit of the heterotrimeric GatCAB amidotransferase (AdT) complex, composed of A, B and C subunits.

It localises to the mitochondrion. It catalyses the reaction L-glutamyl-tRNA(Gln) + L-glutamine + ATP + H2O = L-glutaminyl-tRNA(Gln) + L-glutamate + ADP + phosphate + H(+). Allows the formation of correctly charged Gln-tRNA(Gln) through the transamidation of misacylated Glu-tRNA(Gln) in the mitochondria. The reaction takes place in the presence of glutamine and ATP through an activated gamma-phospho-Glu-tRNA(Gln). In Drosophila pseudoobscura pseudoobscura (Fruit fly), this protein is Glutamyl-tRNA(Gln) amidotransferase subunit C, mitochondrial.